A 105-amino-acid chain; its full sequence is Plastocyanin (105 aa).

The Plastocyanin-like domain maps to 1-105; sequence ETYTVKLGSD…GMVGKITVAG (105 aa). Residues His39, Cys89, His92, and Met97 each contribute to the Cu(2+) site.

This sequence belongs to the plastocyanin family. It depends on Cu(2+) as a cofactor.

It is found in the cellular thylakoid membrane. Functionally, participates in electron transfer between P700 and the cytochrome b6-f complex in photosystem I. This chain is Plastocyanin (petE), found in Anabaena variabilis.